A 574-amino-acid chain; its full sequence is 3-hydroxy-3-methylglutaryl-coenzyme A reductase 3 (574 aa).

Residues 1–30 (MDVRRRPVKPLYPSEHISSGEPLKPHNQDS) are disordered. The helical transmembrane segment at 41–61 (PLYLTNGLFFTMFFSVMYFLL) threads the bilayer. An N-linked (GlcNAc...) asparagine glycan is attached at N78. Residues 83–103 (VAMVSLIASVIYLLGFFGIGF) traverse the membrane as a helical segment. The tract at residues 104–161 (VQSFVSKGNNDSWDVEDESPEQFIDRTVTPPPVRRNIPMKSVPVAEKTAQIITPFSSE) is linker. N113 carries N-linked (GlcNAc...) asparagine glycosylation. A catalytic region spans residues 162 to 574 (DDEVVIKSVV…YNRSCKDVTK (413 aa)). The active-site Charge relay system is the E256. N-linked (GlcNAc...) asparagine glycosylation is present at N320. K388 serves as the catalytic Charge relay system. An N-linked (GlcNAc...) asparagine glycan is attached at N433. Residue D464 is the Charge relay system of the active site. The active-site Proton donor is H562. The N-linked (GlcNAc...) asparagine glycan is linked to N566.

The protein belongs to the HMG-CoA reductase family. In terms of tissue distribution, expressed in mature petals and anthers.

Its subcellular location is the endoplasmic reticulum membrane. The catalysed reaction is (R)-mevalonate + 2 NADP(+) + CoA = (3S)-3-hydroxy-3-methylglutaryl-CoA + 2 NADPH + 2 H(+). It participates in metabolic intermediate biosynthesis; (R)-mevalonate biosynthesis; (R)-mevalonate from acetyl-CoA: step 3/3. Its function is as follows. Catalyzes the synthesis of mevalonate. The specific precursor of all isoprenoid compounds present in plants. The chain is 3-hydroxy-3-methylglutaryl-coenzyme A reductase 3 (HMG3) from Solanum tuberosum (Potato).